We begin with the raw amino-acid sequence, 133 residues long: Small ribosomal subunit protein uS8 (133 aa).

It belongs to the universal ribosomal protein uS8 family. In terms of assembly, part of the 30S ribosomal subunit. Contacts proteins S5 and S12.

Functionally, one of the primary rRNA binding proteins, it binds directly to 16S rRNA central domain where it helps coordinate assembly of the platform of the 30S subunit. The polypeptide is Small ribosomal subunit protein uS8 (Leptospira interrogans serogroup Icterohaemorrhagiae serovar copenhageni (strain Fiocruz L1-130)).